We begin with the raw amino-acid sequence, 411 residues long: MADVVVGIQWGDEGKGKIVDRIAKDYDFVVRYQGGHNAGHTIVHKGVKHSLHLMPSGVLYSQCKNIISSAVVVSVKDLCEEISMFENLENRLFVSDRAHVILPYHVQKDAFKEKSQNIGTTKKGIGPCYEDKMARSGIRMGDLLDDRILEEKLKVHFKAIEPFKEAYDLNETYEKDLREYFEQYAPKIRPFIKDTTSMLIEANQKGEKILLEGAQGTLLDIDLGTYPFVTSSNTTSASACVSTGLNPKAINEIIGITKAYSTRVGNGPFPSEDTTPMGDHLRIGGAEFGTTTKRPRRCGWLDLVALKYACALNGCTQLALMKLDVLDGINEIKVCVAYERRGEKLETFPSDLKDCVPIYQTFKGWEKSVGVRKLDDLEQNTREYIRFIEEEVGVKIRLISTSPEREDTIFL.

GTP-binding positions include 11 to 17 (GDEGKGK) and 39 to 41 (GHT). D12 (proton acceptor) is an active-site residue. Residues D12 and G39 each coordinate Mg(2+). Residues 12-15 (DEGK), 37-40 (NAGH), T121, R135, Q215, T230, and R294 each bind IMP. H40 serves as the catalytic Proton donor. 290–296 (TTTKRPR) is a binding site for substrate. GTP-binding positions include R296, 322-324 (KLD), and 400-402 (STS).

The protein belongs to the adenylosuccinate synthetase family. In terms of assembly, homodimer. Mg(2+) is required as a cofactor.

The protein localises to the cytoplasm. The enzyme catalyses IMP + L-aspartate + GTP = N(6)-(1,2-dicarboxyethyl)-AMP + GDP + phosphate + 2 H(+). Its pathway is purine metabolism; AMP biosynthesis via de novo pathway; AMP from IMP: step 1/2. In terms of biological role, plays an important role in the de novo pathway of purine nucleotide biosynthesis. Catalyzes the first committed step in the biosynthesis of AMP from IMP. This Helicobacter acinonychis (strain Sheeba) protein is Adenylosuccinate synthetase.